Consider the following 444-residue polypeptide: Putative zinc metalloprotease XF_1047 (444 aa).

H22 provides a ligand contact to Zn(2+). E23 is a catalytic residue. H26 is a binding site for Zn(2+). The chain crosses the membrane as a helical span at residues 98 to 120 (IAIVAAGPLANLLLCMLLLWVLF). A PDZ domain is found at 192-276 (TLELSKLKQP…DGHPGMIEIR (85 aa)). Transmembrane regions (helical) follow at residues 371–393 (VGWF…LFPI) and 418–440 (AMAA…AFYN).

This sequence belongs to the peptidase M50B family. Zn(2+) is required as a cofactor.

It is found in the cell inner membrane. The protein is Putative zinc metalloprotease XF_1047 of Xylella fastidiosa (strain 9a5c).